The primary structure comprises 256 residues: Probable aquaporin TIP4-2 (256 aa).

5 consecutive transmembrane segments (helical) span residues 25-45 (AVAG…ASTI), 59-79 (AVTA…TAGF), 86-108 (LNPA…SALY), 146-166 (GVAA…ATIL), and 178-198 (PLLT…LTGA). Residues 87–89 (NPA) carry the NPA 1 motif. The NPA 2 signature appears at 201-203 (NPA). A helical membrane pass occupies residues 220–240 (VYWVGPLAGGPLAVVAYELLF).

The protein belongs to the MIP/aquaporin (TC 1.A.8) family. TIP (TC 1.A.8.10) subfamily. Expressed in roots, leaves and anthers.

The protein resides in the vacuole membrane. Functionally, aquaporins facilitate the transport of water and small neutral solutes across cell membranes. May be involved in transport from the vacuolar compartment to the cytoplasm. This chain is Probable aquaporin TIP4-2 (TIP4-2), found in Oryza sativa subsp. japonica (Rice).